The primary structure comprises 285 residues: Nucleotide-binding protein Glov_2163 (285 aa).

ATP is bound at residue 8–15 (GMSGSGKS). 59–62 (DIRG) serves as a coordination point for GTP.

Belongs to the RapZ-like family.

Its function is as follows. Displays ATPase and GTPase activities. The polypeptide is Nucleotide-binding protein Glov_2163 (Trichlorobacter lovleyi (strain ATCC BAA-1151 / DSM 17278 / SZ) (Geobacter lovleyi)).